Reading from the N-terminus, the 271-residue chain is Digeranylgeranylglyceryl phosphate synthase (271 aa).

8 consecutive transmembrane segments (helical) span residues 11–31 (INCA…GARL), 33–53 (VGAV…NAIN), 88–108 (FAVG…IAAL), 125–145 (LIGN…GAAV), 149–169 (PAPA…REIL), 201–221 (VFAI…VVGW), 224–244 (LVLA…AVAG), and 251–271 (AQRV…ASLL).

Belongs to the UbiA prenyltransferase family. DGGGP synthase subfamily. Mg(2+) is required as a cofactor.

Its subcellular location is the cell membrane. It carries out the reaction sn-3-O-(geranylgeranyl)glycerol 1-phosphate + (2E,6E,10E)-geranylgeranyl diphosphate = 2,3-bis-O-(geranylgeranyl)-sn-glycerol 1-phosphate + diphosphate. It functions in the pathway membrane lipid metabolism; glycerophospholipid metabolism. Its function is as follows. Prenyltransferase that catalyzes the transfer of the geranylgeranyl moiety of geranylgeranyl diphosphate (GGPP) to the C2 hydroxyl of (S)-3-O-geranylgeranylglyceryl phosphate (GGGP). This reaction is the second ether-bond-formation step in the biosynthesis of archaeal membrane lipids. In Methanopyrus kandleri (strain AV19 / DSM 6324 / JCM 9639 / NBRC 100938), this protein is Digeranylgeranylglyceryl phosphate synthase.